We begin with the raw amino-acid sequence, 311 residues long: Heme A synthase (311 aa).

At 1 to 6 (MQRFIK) the chain is on the cytoplasmic side. Residues 7–27 (WLAVITSLDLLIVLLGGALVT) form a helical membrane-spanning segment. Topologically, residues 28 to 62 (KTGSGQGCGKSWPLCNGEFVPSNLSMETIIELSHR) are extracellular. A disulfide bond links cysteine 35 and cysteine 42. The active site involves glutamate 58. Position 61 (histidine 61) interacts with heme o. The chain crosses the membrane as a helical span at residues 63–83 (LTSGSAGILVTLLCILSWKYY). Residues 84–91 (KHVRETKT) lie on the Cytoplasmic side of the membrane. Residues 92–112 (LAILSFVFLVAQALMGAAAVV) traverse the membrane as a helical segment. Topologically, residues 113-121 (WGQMPAVLA) are extracellular. Residues 122–142 (IHFGISLISFASVILLTCLIF) form a helical membrane-spanning segment. Residue histidine 123 coordinates heme o. The Cytoplasmic segment spans residues 143 to 159 (EIDQKFDARSLIMDKKM). The helical transmembrane segment at 160–180 (KFHIYGVTIYCYLVVYTGALV) threads the bilayer. Residues 181–211 (RHERASLACPDFPLCSKNRPMPTQLHEWVQM) lie on the Extracellular side of the membrane. An intrachain disulfide couples cysteine 189 to cysteine 195. A helical membrane pass occupies residues 212–232 (GHRLAAMLIFVWILYAMILAI). Histidine 213 provides a ligand contact to heme b. The Cytoplasmic portion of the chain corresponds to 233–243 (RHYKQQPVVYW). The helical transmembrane segment at 244–264 (GWIISFILVTLQAIVGILVVF) threads the bilayer. The Extracellular segment spans residues 265–271 (TNASLAM). A helical membrane pass occupies residues 272–292 (ALLHSLFISCLFAVLCYLVML). Histidine 275 is a heme b binding site. Over 293-311 (GTRSKVNAKEAASTSKQTK) the chain is Cytoplasmic.

It belongs to the COX15/CtaA family. Type 1 subfamily. As to quaternary structure, interacts with CtaB. Heme b serves as cofactor.

It is found in the cell membrane. It carries out the reaction Fe(II)-heme o + 2 A + H2O = Fe(II)-heme a + 2 AH2. Its pathway is porphyrin-containing compound metabolism; heme A biosynthesis; heme A from heme O: step 1/1. In terms of biological role, catalyzes the conversion of heme O to heme A by two successive hydroxylations of the methyl group at C8. The first hydroxylation forms heme I, the second hydroxylation results in an unstable dihydroxymethyl group, which spontaneously dehydrates, resulting in the formyl group of heme A. This is Heme A synthase from Bacillus cereus (strain 03BB102).